The primary structure comprises 550 residues: Glucose-6-phosphate isomerase (550 aa).

The active-site Proton donor is E356. Residues H387 and K515 contribute to the active site.

It belongs to the GPI family.

The protein resides in the cytoplasm. It carries out the reaction alpha-D-glucose 6-phosphate = beta-D-fructose 6-phosphate. It participates in carbohydrate biosynthesis; gluconeogenesis. It functions in the pathway carbohydrate degradation; glycolysis; D-glyceraldehyde 3-phosphate and glycerone phosphate from D-glucose: step 2/4. Catalyzes the reversible isomerization of glucose-6-phosphate to fructose-6-phosphate. This is Glucose-6-phosphate isomerase from Vibrio cholerae serotype O1 (strain ATCC 39315 / El Tor Inaba N16961).